Here is a 401-residue protein sequence, read N- to C-terminus: S-adenosylmethionine synthase (401 aa).

His-16 is an ATP binding site. Residue Asp-18 participates in Mg(2+) binding. Glu-44 provides a ligand contact to K(+). Positions 57 and 109 each coordinate L-methionine. The flexible loop stretch occupies residues 109-119; that stretch reads QSAHIAQGVDA. Residues 174-176, Asp-251, 257-258, Ala-274, and Lys-278 each bind ATP; these read DAK and RK. Asp-251 serves as a coordination point for L-methionine. Lys-282 is a binding site for L-methionine.

This sequence belongs to the AdoMet synthase family. In terms of assembly, homotetramer; dimer of dimers. Requires Mg(2+) as cofactor. The cofactor is K(+).

Its subcellular location is the cytoplasm. The catalysed reaction is L-methionine + ATP + H2O = S-adenosyl-L-methionine + phosphate + diphosphate. The protein operates within amino-acid biosynthesis; S-adenosyl-L-methionine biosynthesis; S-adenosyl-L-methionine from L-methionine: step 1/1. Catalyzes the formation of S-adenosylmethionine (AdoMet) from methionine and ATP. The overall synthetic reaction is composed of two sequential steps, AdoMet formation and the subsequent tripolyphosphate hydrolysis which occurs prior to release of AdoMet from the enzyme. This chain is S-adenosylmethionine synthase, found in Novosphingobium aromaticivorans (strain ATCC 700278 / DSM 12444 / CCUG 56034 / CIP 105152 / NBRC 16084 / F199).